Here is a 214-residue protein sequence, read N- to C-terminus: Large ribosomal subunit protein bL25 (214 aa).

The disordered stretch occupies residues 194–214 (TTEAEETAEPEVIRRKEEEEE). A compositionally biased stretch (basic and acidic residues) spans 204 to 214 (EVIRRKEEEEE).

This sequence belongs to the bacterial ribosomal protein bL25 family. CTC subfamily. As to quaternary structure, part of the 50S ribosomal subunit; part of the 5S rRNA/L5/L18/L25 subcomplex. Contacts the 5S rRNA. Binds to the 5S rRNA independently of L5 and L18.

Functionally, this is one of the proteins that binds to the 5S RNA in the ribosome where it forms part of the central protuberance. The polypeptide is Large ribosomal subunit protein bL25 (Thermotoga petrophila (strain ATCC BAA-488 / DSM 13995 / JCM 10881 / RKU-1)).